We begin with the raw amino-acid sequence, 480 residues long: Pyruvate kinase (480 aa).

Residue R36 coordinates substrate. The K(+) site is built by N38, S40, and D70. Residue 38 to 41 (NFSH) coordinates ATP. ATP-binding residues include R77 and K160. E225 contacts Mg(2+). Residues G251, D252, and T284 each contribute to the substrate site. D252 serves as a coordination point for Mg(2+).

It belongs to the pyruvate kinase family. Homotetramer. It depends on Mg(2+) as a cofactor. K(+) is required as a cofactor.

The enzyme catalyses pyruvate + ATP = phosphoenolpyruvate + ADP + H(+). It functions in the pathway carbohydrate degradation; glycolysis; pyruvate from D-glyceraldehyde 3-phosphate: step 5/5. Allosterically activated by AMP and by several sugar phosphates. Belongs to type II PK. This is Pyruvate kinase (pykA) from Buchnera aphidicola subsp. Acyrthosiphon pisum (strain APS) (Acyrthosiphon pisum symbiotic bacterium).